Consider the following 229-residue polypeptide: Large ribosomal subunit protein uL1 (229 aa).

The protein belongs to the universal ribosomal protein uL1 family. In terms of assembly, part of the 50S ribosomal subunit.

Functionally, binds directly to 23S rRNA. The L1 stalk is quite mobile in the ribosome, and is involved in E site tRNA release. In terms of biological role, protein L1 is also a translational repressor protein, it controls the translation of the L11 operon by binding to its mRNA. This chain is Large ribosomal subunit protein uL1, found in Listeria monocytogenes serovar 1/2a (strain ATCC BAA-679 / EGD-e).